A 64-amino-acid chain; its full sequence is Large ribosomal subunit protein bL35 (64 aa).

Residues 1-22 are disordered; that stretch reads MPKAKTHSGASKRFRRTGTGKI.

The protein belongs to the bacterial ribosomal protein bL35 family.

In Mycobacterium tuberculosis (strain ATCC 25177 / H37Ra), this protein is Large ribosomal subunit protein bL35.